A 352-amino-acid chain; its full sequence is N-acetyl-gamma-glutamyl-phosphate reductase (352 aa).

Residue C156 is part of the active site.

The protein belongs to the NAGSA dehydrogenase family. Type 1 subfamily.

Its subcellular location is the cytoplasm. It carries out the reaction N-acetyl-L-glutamate 5-semialdehyde + phosphate + NADP(+) = N-acetyl-L-glutamyl 5-phosphate + NADPH + H(+). It participates in amino-acid biosynthesis; L-arginine biosynthesis; N(2)-acetyl-L-ornithine from L-glutamate: step 3/4. Its function is as follows. Catalyzes the NADPH-dependent reduction of N-acetyl-5-glutamyl phosphate to yield N-acetyl-L-glutamate 5-semialdehyde. This chain is N-acetyl-gamma-glutamyl-phosphate reductase, found in Afipia carboxidovorans (strain ATCC 49405 / DSM 1227 / KCTC 32145 / OM5) (Oligotropha carboxidovorans).